Consider the following 559-residue polypeptide: Urocanate hydratase (559 aa).

NAD(+)-binding positions include 54-55, Gln-132, 178-180, Glu-198, Arg-203, 244-245, 265-269, 275-276, and Tyr-324; these read GG, GMG, NA, QTSAH, and YL. The active site involves Cys-412. Gly-494 contributes to the NAD(+) binding site.

It belongs to the urocanase family. Requires NAD(+) as cofactor.

The protein resides in the cytoplasm. It carries out the reaction 4-imidazolone-5-propanoate = trans-urocanate + H2O. It functions in the pathway amino-acid degradation; L-histidine degradation into L-glutamate; N-formimidoyl-L-glutamate from L-histidine: step 2/3. Its function is as follows. Catalyzes the conversion of urocanate to 4-imidazolone-5-propionate. This is Urocanate hydratase from Photorhabdus laumondii subsp. laumondii (strain DSM 15139 / CIP 105565 / TT01) (Photorhabdus luminescens subsp. laumondii).